A 364-amino-acid polypeptide reads, in one-letter code: Aminomethyltransferase (364 aa).

It belongs to the GcvT family. As to quaternary structure, the glycine cleavage system is composed of four proteins: P, T, L and H.

It catalyses the reaction N(6)-[(R)-S(8)-aminomethyldihydrolipoyl]-L-lysyl-[protein] + (6S)-5,6,7,8-tetrahydrofolate = N(6)-[(R)-dihydrolipoyl]-L-lysyl-[protein] + (6R)-5,10-methylene-5,6,7,8-tetrahydrofolate + NH4(+). In terms of biological role, the glycine cleavage system catalyzes the degradation of glycine. The sequence is that of Aminomethyltransferase from Shewanella loihica (strain ATCC BAA-1088 / PV-4).